The following is a 37-amino-acid chain: Large ribosomal subunit protein bL36 (37 aa).

This sequence belongs to the bacterial ribosomal protein bL36 family.

The polypeptide is Large ribosomal subunit protein bL36 (Nitratidesulfovibrio vulgaris (strain ATCC 29579 / DSM 644 / CCUG 34227 / NCIMB 8303 / VKM B-1760 / Hildenborough) (Desulfovibrio vulgaris)).